A 206-amino-acid polypeptide reads, in one-letter code: Small ribosomal subunit protein uS4 (206 aa).

The S4 RNA-binding domain maps to Gly96–Ala158.

It belongs to the universal ribosomal protein uS4 family. As to quaternary structure, part of the 30S ribosomal subunit. Contacts protein S5. The interaction surface between S4 and S5 is involved in control of translational fidelity.

Its function is as follows. One of the primary rRNA binding proteins, it binds directly to 16S rRNA where it nucleates assembly of the body of the 30S subunit. In terms of biological role, with S5 and S12 plays an important role in translational accuracy. This Vibrio vulnificus (strain CMCP6) protein is Small ribosomal subunit protein uS4.